The chain runs to 209 residues: Uracil phosphoribosyltransferase (209 aa).

Residues R79, R104, and 131–139 (DPMLATGGS) each bind 5-phospho-alpha-D-ribose 1-diphosphate. Uracil is bound by residues I194 and 199–201 (GDA). D200 contacts 5-phospho-alpha-D-ribose 1-diphosphate.

It belongs to the UPRTase family. Requires Mg(2+) as cofactor.

The catalysed reaction is UMP + diphosphate = 5-phospho-alpha-D-ribose 1-diphosphate + uracil. It participates in pyrimidine metabolism; UMP biosynthesis via salvage pathway; UMP from uracil: step 1/1. With respect to regulation, allosterically activated by GTP. Functionally, catalyzes the conversion of uracil and 5-phospho-alpha-D-ribose 1-diphosphate (PRPP) to UMP and diphosphate. The chain is Uracil phosphoribosyltransferase from Lysinibacillus sphaericus (strain C3-41).